The chain runs to 552 residues: Dihydroxy-acid dehydratase (552 aa).

Residue D78 participates in Mg(2+) binding. [2Fe-2S] cluster is bound at residue C119. The Mg(2+) site is built by D120 and K121. Residue K121 is modified to N6-carboxylysine. C191 serves as a coordination point for [2Fe-2S] cluster. E442 lines the Mg(2+) pocket. The active-site Proton acceptor is S468.

It belongs to the IlvD/Edd family. In terms of assembly, homodimer. [2Fe-2S] cluster serves as cofactor. Requires Mg(2+) as cofactor.

The catalysed reaction is (2R)-2,3-dihydroxy-3-methylbutanoate = 3-methyl-2-oxobutanoate + H2O. It carries out the reaction (2R,3R)-2,3-dihydroxy-3-methylpentanoate = (S)-3-methyl-2-oxopentanoate + H2O. It functions in the pathway amino-acid biosynthesis; L-isoleucine biosynthesis; L-isoleucine from 2-oxobutanoate: step 3/4. The protein operates within amino-acid biosynthesis; L-valine biosynthesis; L-valine from pyruvate: step 3/4. Functionally, functions in the biosynthesis of branched-chain amino acids. Catalyzes the dehydration of (2R,3R)-2,3-dihydroxy-3-methylpentanoate (2,3-dihydroxy-3-methylvalerate) into 2-oxo-3-methylpentanoate (2-oxo-3-methylvalerate) and of (2R)-2,3-dihydroxy-3-methylbutanoate (2,3-dihydroxyisovalerate) into 2-oxo-3-methylbutanoate (2-oxoisovalerate), the penultimate precursor to L-isoleucine and L-valine, respectively. The protein is Dihydroxy-acid dehydratase of Ruminiclostridium cellulolyticum (strain ATCC 35319 / DSM 5812 / JCM 6584 / H10) (Clostridium cellulolyticum).